A 460-amino-acid chain; its full sequence is Anthocyanidin 3-O-glucoside 5-O-glucosyltransferase 1 (460 aa).

The signal sequence occupies residues 1–22 (MVRRRVLLATFPAQGHINPALQ). Histidine 16 acts as the Proton acceptor in catalysis. Residue histidine 16 participates in an anthocyanidin binding. UDP-alpha-D-glucose contacts are provided by glutamine 338, histidine 353, tryptophan 356, asparagine 357, serine 358, glutamate 361, aspartate 377, and glutamine 378.

The protein belongs to the UDP-glycosyltransferase family.

It catalyses the reaction an anthocyanidin 3-O-beta-D-glucoside + UDP-alpha-D-glucose = an anthocyanidin 3,5-di-O-beta-D-glucoside + UDP + 2 H(+). It functions in the pathway pigment biosynthesis; anthocyanin biosynthesis. Its function is as follows. Catalyzes the glucosylation at the O-5 position of anthocyanidin 3-glucosides to form anthocyanidin 3,5-di-O-glucosides using UDP-glucose as sugar donor. Anthocyanidin 3,5-di-O-glucosides are molecules that are responsible for pigmentation. Also acts on anthocyanidin 3-O-(6-O-malonylglucoside). Much less active with hydroxycinnamoylglucose derivatives. No activity in the absence of the 3-O-glucoside group. The sequence is that of Anthocyanidin 3-O-glucoside 5-O-glucosyltransferase 1 (PF3R4) from Perilla frutescens (Beefsteak mint).